The following is a 148-amino-acid chain: Hemoglobin subunit beta-A (148 aa).

The 146-residue stretch at 3 to 148 folds into the Globin domain; that stretch reads DWTDAERAAI…VVSALGRQYH (146 aa). The heme b site is built by histidine 64 and histidine 93.

The protein belongs to the globin family. In terms of assembly, heterotetramer of two alpha chains and two beta chains. As to expression, red blood cells.

Involved in oxygen transport from gills to the various peripheral tissues. The protein is Hemoglobin subunit beta-A (hbb1) of Seriola quinqueradiata (Five-ray yellowtail).